Reading from the N-terminus, the 188-residue chain is Peroxiredoxin y4vD (188 aa).

Residues 2–152 (PVKKRVPFVA…VEQWFEEEGF (151 aa)) form the Thioredoxin domain. The Cysteine sulfenic acid (-SOH) intermediate (for peroxiredoxin activity) role is filled by Cys56.

It belongs to the peroxiredoxin family. Prx5 subfamily. In terms of assembly, monomer.

It catalyses the reaction a hydroperoxide + 2 glutathione = an alcohol + glutathione disulfide + H2O. In terms of biological role, thiol-specific peroxidase that catalyzes the reduction of hydrogen peroxide and organic hydroperoxides to water and alcohols, respectively. Plays a role in cell protection against oxidative stress by detoxifying peroxides. This Sinorhizobium fredii (strain NBRC 101917 / NGR234) protein is Peroxiredoxin y4vD.